We begin with the raw amino-acid sequence, 602 residues long: UvrABC system protein C (602 aa).

In terms of domain architecture, GIY-YIG spans 17–94 (TTSGCYKMYS…IKEYKPDYNI (78 aa)). One can recognise a UVR domain in the interval 199 to 234 (SKLLDETEIKMKEAIKKEDFEAAIKLKETKRSLIEI).

It belongs to the UvrC family. In terms of assembly, interacts with UvrB in an incision complex.

It is found in the cytoplasm. Functionally, the UvrABC repair system catalyzes the recognition and processing of DNA lesions. UvrC both incises the 5' and 3' sides of the lesion. The N-terminal half is responsible for the 3' incision and the C-terminal half is responsible for the 5' incision. This Borrelia hermsii (strain HS1 / DAH) protein is UvrABC system protein C.